A 380-amino-acid polypeptide reads, in one-letter code: ATPase ASNA1 homolog (380 aa).

48–55 (KGGVGKTT) is a binding site for ATP. Asp77 is a catalytic residue. The ATP site is built by Glu248 and Asn275.

It belongs to the arsA ATPase family. As to quaternary structure, homodimer.

The protein localises to the cytoplasm. The protein resides in the endoplasmic reticulum. In terms of biological role, ATPase required for the post-translational delivery of tail-anchored (TA) proteins to the endoplasmic reticulum. Recognizes and selectively binds the transmembrane domain of TA proteins in the cytosol. This complex then targets to the endoplasmic reticulum by membrane-bound receptors, where the tail-anchored protein is released for insertion. This process is regulated by ATP binding and hydrolysis. ATP binding drives the homodimer towards the closed dimer state, facilitating recognition of newly synthesized TA membrane proteins. ATP hydrolysis is required for insertion. Subsequently, the homodimer reverts towards the open dimer state, lowering its affinity for the membrane-bound receptor, and returning it to the cytosol to initiate a new round of targeting. This Plasmodium chabaudi chabaudi protein is ATPase ASNA1 homolog.